Reading from the N-terminus, the 345-residue chain is Linoleate 10R-lipoxygenase COP4 (345 aa).

Mg(2+) contacts are provided by Asp87, Asp91, Asn222, Ser226, and Glu230. The short motif at Asp87–Asp91 is the DDXXD motif element.

The protein belongs to the terpene synthase family. Mg(2+) is required as a cofactor.

It carries out the reaction (2E,6E)-farnesyl diphosphate + H2O = cubebol + diphosphate. The enzyme catalyses (2E,6E)-farnesyl diphosphate = beta-copaene + diphosphate. The catalysed reaction is (2E,6E)-farnesyl diphosphate = beta-cubebene + diphosphate. It catalyses the reaction (2E,6E)-farnesyl diphosphate = (+)-sativene + diphosphate. Sesquiterpene synthase that catalyzes the cyclization of farnesyl diphosphate (FPP) into multiple products, including germacrene D, beta-copaene, beta-cubebene, (+)-sativene and cubebol, a natural sesquiterpene alcohol used in the food industry for its cooling and refreshing taste. Terpenoid hydrocarbons resulting from cyclization of farnesyl diphosphate are intermediates in the biosynthesis of biologically active compounds such as antibiotics, toxins and pheromones. The polypeptide is Linoleate 10R-lipoxygenase COP4 (COP4) (Coprinopsis cinerea (strain Okayama-7 / 130 / ATCC MYA-4618 / FGSC 9003) (Inky cap fungus)).